Consider the following 467-residue polypeptide: Pancreatic lipase-related protein 3 (467 aa).

An N-terminal signal peptide occupies residues 1-17 (MLGIWIVAFLFFGTSRG). A disulfide bond links Cys21 and Cys27. A glycan (N-linked (GlcNAc...) asparagine) is linked at Asn74. An intrachain disulfide couples Cys107 to Cys118. A glycan (N-linked (GlcNAc...) asparagine) is linked at Asn125. The active-site Nucleophile is Ser168. Asp191 (charge relay system) is an active-site residue. Cysteines 252 and 277 form a disulfide. The Charge relay system role is filled by His279. Disulfide bonds link Cys301/Cys312, Cys315/Cys320, and Cys451/Cys467. A PLAT domain is found at 355-467 (WRHKLSVKLS…PNILQNLKPC (113 aa)).

Belongs to the AB hydrolase superfamily. Lipase family. Overexpressed in hepatocellular carcinoma.

It localises to the secreted. It carries out the reaction a triacylglycerol + H2O = a diacylglycerol + a fatty acid + H(+). The protein is Pancreatic lipase-related protein 3 (PNLIPRP3) of Homo sapiens (Human).